A 553-amino-acid polypeptide reads, in one-letter code: Glutamate--tRNA ligase (553 aa).

Positions 98 to 108 (PNPSGPLHIGH) match the 'HIGH' region motif.

The protein belongs to the class-I aminoacyl-tRNA synthetase family. Glutamate--tRNA ligase type 2 subfamily.

It localises to the cytoplasm. The catalysed reaction is tRNA(Glu) + L-glutamate + ATP = L-glutamyl-tRNA(Glu) + AMP + diphosphate. Functionally, catalyzes the attachment of glutamate to tRNA(Glu) in a two-step reaction: glutamate is first activated by ATP to form Glu-AMP and then transferred to the acceptor end of tRNA(Glu). This chain is Glutamate--tRNA ligase, found in Methanocaldococcus jannaschii (strain ATCC 43067 / DSM 2661 / JAL-1 / JCM 10045 / NBRC 100440) (Methanococcus jannaschii).